The primary structure comprises 334 residues: S-adenosylmethionine decarboxylase proenzyme 1 (334 aa).

Residue phenylalanine 7 participates in substrate binding. Active-site residues include glutamate 8 and glutamate 11. Glutamate 67 contacts substrate. Serine 68 (schiff-base intermediate with substrate; via pyruvic acid) is an active-site residue. Serine 68 bears the Pyruvic acid (Ser); by autocatalysis mark. Cysteine 82 acts as the Proton donor; for catalytic activity in catalysis. Phenylalanine 223 contributes to the substrate binding site. Residues serine 229 and histidine 243 each act as proton acceptor; for processing activity in the active site. Glutamate 247 is a substrate binding site. Serine 298 bears the Phosphoserine mark.

Belongs to the eukaryotic AdoMetDC family. In terms of assembly, heterotetramer of two alpha and two beta chains. Pyruvate serves as cofactor. Is synthesized initially as an inactive proenzyme. Formation of the active enzyme involves a self-maturation process in which the active site pyruvoyl group is generated from an internal serine residue via an autocatalytic post-translational modification. Two non-identical subunits are generated from the proenzyme in this reaction, and the pyruvate is formed at the N-terminus of the alpha chain, which is derived from the carboxyl end of the proenzyme. The post-translation cleavage follows an unusual pathway, termed non-hydrolytic serinolysis, in which the side chain hydroxyl group of the serine supplies its oxygen atom to form the C-terminus of the beta chain, while the remainder of the serine residue undergoes an oxidative deamination to produce ammonia and the pyruvoyl group blocking the N-terminus of the alpha chain. In terms of tissue distribution, expressed in embryonic stem cells; subsequently down-regulated in differentiating neural precursor cells.

It carries out the reaction S-adenosyl-L-methionine + H(+) = S-adenosyl 3-(methylsulfanyl)propylamine + CO2. Its pathway is amine and polyamine biosynthesis; S-adenosylmethioninamine biosynthesis; S-adenosylmethioninamine from S-adenosyl-L-methionine: step 1/1. Functionally, essential for biosynthesis of the polyamines spermidine and spermine. Promotes maintenance and self-renewal of embryonic stem cells, by maintaining spermine levels. In Mus musculus (Mouse), this protein is S-adenosylmethionine decarboxylase proenzyme 1 (Amd1).